A 337-amino-acid polypeptide reads, in one-letter code: Transcription factor bHLH121 (337 aa).

The 51-residue stretch at 58 to 108 (ARKSQKAGREKLRREKLNEHFVELGNVLDPERPKNDKATILTDTVQLLKEL) folds into the bHLH domain. The disordered stretch occupies residues 235–337 (VHIPQNPGNR…AGGQKPDDAK (103 aa)). Composition is skewed to basic and acidic residues over residues 244-263 (RSRE…KAED) and 280-291 (SDKDTLQRPEKT). Low complexity predominate over residues 297 to 317 (NNNNNSIEESSHSSKCSSSPS).

In terms of assembly, homodimer. Expressed constitutively in roots, leaves, stems, and flowers.

The protein resides in the nucleus. This Arabidopsis thaliana (Mouse-ear cress) protein is Transcription factor bHLH121 (BHLH121).